The sequence spans 107 residues: Nucleoid-associated protein CE0210 (107 aa).

Belongs to the YbaB/EbfC family. Homodimer.

It localises to the cytoplasm. It is found in the nucleoid. Its function is as follows. Binds to DNA and alters its conformation. May be involved in regulation of gene expression, nucleoid organization and DNA protection. In Corynebacterium efficiens (strain DSM 44549 / YS-314 / AJ 12310 / JCM 11189 / NBRC 100395), this protein is Nucleoid-associated protein CE0210.